The following is an 838-amino-acid chain: V-type proton ATPase 116 kDa subunit a 1 (838 aa).

At 1 to 388 (MGELFRSEEM…DAYGIGTYRE (388 aa)) the chain is on the cytoplasmic side. 2 positions are modified to phosphothreonine: Thr-250 and Thr-360. Tyr-364 is modified (phosphotyrosine). The chain crosses the membrane as a helical span at residues 389–407 (INPAPYTIITFPFLFAVMF). Residues 408–409 (GD) are Vacuolar-facing. The chain crosses the membrane as a helical span at residues 410–426 (LGHGILMTLFAVWMVLK). The Cytoplasmic segment spans residues 427 to 441 (ESRILSQKNENEMFS). Residues 442-471 (TIFSGRYIILLMGVFSIYTGLIYNDCFSKS) form a helical membrane-spanning segment. At 472-535 (LNIFGSSWSV…ATNKLTFLNS (64 aa)) the chain is on the vacuolar side. Residues 536–555 (FKMKMSVILGIIHMLFGVSL) traverse the membrane as a helical segment. Residues 556–573 (SLFNHTYFKKPLNIYFGF) are Cytoplasmic-facing. The chain crosses the membrane as a helical span at residues 574–594 (IPEIIFMTSLFGYLVILIFYK). Residues 595–639 (WTAYNAKTSEKAPSLLIHFINMFLFSYGDSGNSMLYSGQKGIQCF) lie on the Vacuolar side of the membrane. The helical transmembrane segment at 640 to 659 (LVVVALLCVPWMLLFKPLVL) threads the bilayer. The Cytoplasmic portion of the chain corresponds to 660–725 (RRQYLRRKHL…DTMVHQAIHT (66 aa)). The chain crosses the membrane as a helical span at residues 726 to 750 (IEYCLGCISNTASYLRLWALSLAHA). Topologically, residues 751 to 771 (QLSEVLWTMVIHIGLKVKSLA) are vacuolar. Residues 772–810 (GGLALFFIFAAFATLTVAILLIMEGLSAFLHALRLHWVE) form a helical membrane-spanning segment. At 811-838 (FQNKFYSGTGFKFLPFSFEHIREGKFDD) the chain is on the cytoplasmic side.

The protein belongs to the V-ATPase 116 kDa subunit family. In terms of assembly, V-ATPase is a heteromultimeric enzyme made up of two complexes: the ATP-hydrolytic V1 complex and the proton translocation V0 complex. The V1 complex consists of three catalytic AB heterodimers that form a heterohexamer, three peripheral stalks each consisting of EG heterodimers, one central rotor including subunits D and F, and the regulatory subunits C and H. The proton translocation complex V0 consists of the proton transport subunit a, a ring of proteolipid subunits c9c'', rotary subunit d, subunits e and f, and the accessory subunits ATP6AP1/Ac45 and ATP6AP2/PRR. Interacts with SPAAR. As to expression, expressed in brain (at protein level). Expressed heart, kidney, liver, spleen, and to a lesser extent in brain.

Its subcellular location is the cytoplasmic vesicle. It localises to the clathrin-coated vesicle membrane. The protein resides in the secretory vesicle. The protein localises to the synaptic vesicle membrane. It is found in the melanosome. In terms of biological role, subunit of the V0 complex of vacuolar(H+)-ATPase (V-ATPase), a multisubunit enzyme composed of a peripheral complex (V1) that hydrolyzes ATP and a membrane integral complex (V0) that translocates protons. V-ATPase is responsible for the acidification of various organelles, such as lysosomes, endosomes, the trans-Golgi network, and secretory granules, including synaptic vesicles. In certain cell types, can be exported to the plasma membrane, where it is involved in the acidification of the extracellular environment. Required for assembly and activity of the vacuolar ATPase. Through its action on compartment acidification, plays an essential role in neuronal development in terms of integrity and connectivity of neurons. This chain is V-type proton ATPase 116 kDa subunit a 1 (ATP6V0A1), found in Bos taurus (Bovine).